The primary structure comprises 463 residues: Phosphomannomutase/phosphoglucomutase (463 aa).

Ser-108 serves as the catalytic Phosphoserine intermediate. Residues Ser-108, Asp-242, Asp-244, and Asp-246 each contribute to the Mg(2+) site. Residues Glu-325, Ser-327, and His-329 each coordinate substrate.

Belongs to the phosphohexose mutase family. As to quaternary structure, monomer. It depends on Mg(2+) as a cofactor.

The catalysed reaction is alpha-D-mannose 1-phosphate = D-mannose 6-phosphate. The enzyme catalyses alpha-D-glucose 1-phosphate = alpha-D-glucose 6-phosphate. Its pathway is nucleotide-sugar biosynthesis; GDP-alpha-D-mannose biosynthesis; alpha-D-mannose 1-phosphate from D-fructose 6-phosphate: step 2/2. The protein operates within bacterial outer membrane biogenesis; lipopolysaccharide biosynthesis. In terms of biological role, the phosphomannomutase activity produces a precursor for alginate polymerization. The alginate layer causes a mucoid phenotype and provides a protective barrier against host immune defenses and antibiotics. Also involved in core-LPS biosynthesis due to its phosphoglucomutase activity. Essential for biofilm production. The chain is Phosphomannomutase/phosphoglucomutase (algC) from Pseudomonas putida (strain ATCC 47054 / DSM 6125 / CFBP 8728 / NCIMB 11950 / KT2440).